We begin with the raw amino-acid sequence, 271 residues long: Small ribosomal subunit protein uS9m (271 aa).

A mitochondrion-targeting transit peptide spans 1 to 11 (MFRSLAKLRCF). The tract at residues 251-271 (KVERKKTGQPKARKKYTWVKR) is disordered. Basic residues predominate over residues 252 to 271 (VERKKTGQPKARKKYTWVKR).

This sequence belongs to the universal ribosomal protein uS9 family. In terms of assembly, component of the mitochondrial small ribosomal subunit (mt-SSU). Mature yeast 74S mitochondrial ribosomes consist of a small (37S) and a large (54S) subunit. The 37S small subunit contains a 15S ribosomal RNA (15S mt-rRNA) and at least 32 different proteins. The 54S large subunit contains a 21S rRNA (21S mt-rRNA) and at least 45 different proteins.

Its subcellular location is the mitochondrion. Its function is as follows. Component of the mitochondrial ribosome (mitoribosome), a dedicated translation machinery responsible for the synthesis of mitochondrial genome-encoded proteins, including at least some of the essential transmembrane subunits of the mitochondrial respiratory chain. The mitoribosomes are attached to the mitochondrial inner membrane and translation products are cotranslationally integrated into the membrane. This is Small ribosomal subunit protein uS9m (mrps9) from Schizosaccharomyces pombe (strain 972 / ATCC 24843) (Fission yeast).